A 959-amino-acid polypeptide reads, in one-letter code: Bifunctional premutilin synthase (959 aa).

Residues 1-542 form a class II diterpene cyclase region; the sequence is MGLSEDLHAR…ALNVPIPRFD (542 aa). Positions 309 to 312 match the DXDD motif motif; the sequence is DADM. The For class II diterpene cyclase activity role is filled by D311. Residues 543 to 959 are class I diterpene synthase; the sequence is PASITTLPPI…TANGSNGIHH (417 aa). Catalysis depends on D649, which acts as the For class I diterpene synthase activity. Residues D649, D653, and N824 each coordinate Mg(2+). Residues 649 to 653 carry the DDXXD motif motif; it reads DDYLD. Residues 931 to 959 are disordered; sequence KGANGVKKTNGLTTNGTKATANGSNGIHH. A compositionally biased stretch (low complexity) spans 934–959; that stretch reads NGVKKTNGLTTNGTKATANGSNGIHH.

The protein belongs to the terpene synthase family. Requires Mg(2+) as cofactor.

It participates in secondary metabolite biosynthesis; terpenoid biosynthesis. In terms of biological role, bifunctional premutilin synthase; part of the gene cluster that mediates the biosynthesis of pleuromutilin, a tricyclic diterpene showing antibacterial properties. The geranylgeranyl diphosphate (GGPP) synthase ple4 catalyzes the first step in pleuromutilin biosynthesis. GGPP is then substrate of the premutilin synthase (PS) ple3 to yield premutilin. Premutilin synthase is a bifunctional enzyme composed of the fusion of a class II diterpene cyclase (DTC) and a class I diterpene synthase (DTS), with the corresponding domains and active sites containing characteristic aspartate-rich motifs. GGPP is first converted to mutildienyl-diphosphate (MPP) at the class II DTC site. MPP is subsequently further cyclized at the class I DTS site, followed by a 1,5-hydride shift and addition of water prior to terminating deprotonation, to yield premutilin. The cytochrome P450 monooxygenases ple5 and ple6 hydroxylate premutilin at C-11 and C-3, respectively, producing 11-hydroxypremutilin and 3-hydroxypremutilin. The combination of the actions of both ple5 and ple6 leads to the production of 3,11-dihydroxypremutilin. The short chain dehydrogenase ple7 further converts 3,11-dihydroxypremutilin into mutilin. The acetyltransferase ple2 then acetylates mutilin to produce 14-O-acetylmutilin. Finally, the cytochrome P450 monooxygenase ple1 catalyzes hydroxylation on the alpha position of the acetyl side chain of 14-O-acetylmutilin to yield pleuromutilin. This chain is Bifunctional premutilin synthase, found in Rhodocybe pseudopiperita (Clitopilus pseudopiperitus).